The primary structure comprises 758 residues: Catalase-peroxidase (758 aa).

Residues methionine 1 to alanine 10 are compositionally biased toward polar residues. The tract at residues methionine 1–tryptophan 59 is disordered. The tryptophyl-tyrosyl-methioninium (Trp-Tyr) (with M-276) cross-link spans tryptophan 128–tyrosine 250. The active-site Proton acceptor is histidine 129. The segment at residues tyrosine 250–methionine 276 is a cross-link (tryptophyl-tyrosyl-methioninium (Tyr-Met) (with W-128)). Histidine 291 is a binding site for heme b.

This sequence belongs to the peroxidase family. Peroxidase/catalase subfamily. In terms of assembly, homodimer or homotetramer. Requires heme b as cofactor. Post-translationally, formation of the three residue Trp-Tyr-Met cross-link is important for the catalase, but not the peroxidase activity of the enzyme.

It catalyses the reaction H2O2 + AH2 = A + 2 H2O. It carries out the reaction 2 H2O2 = O2 + 2 H2O. Functionally, bifunctional enzyme with both catalase and broad-spectrum peroxidase activity. In Salinispora arenicola (strain CNS-205), this protein is Catalase-peroxidase.